The chain runs to 766 residues: Serine/threonine-protein kinase tousled-like 1 (766 aa).

Met-1 carries the N-acetylmethionine modification. Residues 1-19 (MSVQSSSGSLEGPPSWSQL) are compositionally biased toward polar residues. A disordered region spans residues 1–197 (MSVQSSSGSL…SPSPTALAFG (197 aa)). A compositionally biased stretch (low complexity) spans 20–33 (STSPTPGSAAAARS). Thr-38 carries the post-translational modification Phosphothreonine. Positions 43 to 64 (RPREGAMDELHSLDPRRQELLE) are enriched in basic and acidic residues. Residues Ser-54, Ser-77, and Ser-80 each carry the phosphoserine modification. Over residues 68–85 (TGVASGSTGSTGSCSVGA) the composition is skewed to low complexity. Positions 87 to 103 (ASTNNESSNHSFGSLGS) are enriched in polar residues. The segment covering 105–121 (SDKESETPEKKQSESSR) has biased composition (basic and acidic residues). Ser-134, Ser-159, Ser-174, and Ser-176 each carry phosphoserine. Low complexity predominate over residues 170–192 (SPQNSHSHSTPSSSVRPNSPSPT). The stretch at 230–281 (QDLEKKEGRIDDLLRANCDLRRQIDEQQKLLEKYKERLNKCISMSKKLLIEK) forms a coiled coil. Residues 346–383 (LAKRKPPTANNSQAPSTNSEPKQRKNKAVNGAENDPFV) are disordered. Positions 353–365 (TANNSQAPSTNSE) are enriched in polar residues. Residues 397–445 (HEQEEIFKLRLGHLKKEEAEIQAELERLERVRNLHIRELKRINNEDNSQ) adopt a coiled-coil conformation. The 279-residue stretch at 456–734 (YLLLHLLGRG…VHQLANDPYL (279 aa)) folds into the Protein kinase domain. Residues 462–470 (LGRGGFSEV) and Lys-485 each bind ATP. The Proton acceptor role is filled by Asp-586. Phosphoserine is present on Ser-743.

This sequence belongs to the protein kinase superfamily. Ser/Thr protein kinase family. As to quaternary structure, heterodimer with TLK2. The cofactor is Mg(2+). In terms of tissue distribution, widely expressed. Present in fetal placenta, liver, kidney and pancreas but not heart or skeletal muscle. Also found in adult cell lines. Isoform 3 is ubiquitously expressed in all tissues examined.

The protein resides in the nucleus. It catalyses the reaction L-seryl-[protein] + ATP = O-phospho-L-seryl-[protein] + ADP + H(+). The enzyme catalyses L-threonyl-[protein] + ATP = O-phospho-L-threonyl-[protein] + ADP + H(+). Its activity is regulated as follows. Cell-cycle regulated, maximal activity in S-phase. Inactivated by phosphorylation at Ser-743, potentially by CHEK1. In terms of biological role, rapidly and transiently inhibited by phosphorylation following the generation of DNA double-stranded breaks during S-phase. This is cell cycle checkpoint and ATM-pathway dependent and appears to regulate processes involved in chromatin assembly. Isoform 3 phosphorylates and enhances the stability of the t-SNARE SNAP23, augmenting its assembly with syntaxin. Isoform 3 protects the cells from the ionizing radiation by facilitating the repair of DSBs. In vitro, phosphorylates histone H3 at 'Ser-10'. The chain is Serine/threonine-protein kinase tousled-like 1 (TLK1) from Homo sapiens (Human).